Reading from the N-terminus, the 100-residue chain is Putative protein BCL8 (100 aa).

Expressed in prostate and testis.

The protein is Putative protein BCL8 (NBEAP1) of Homo sapiens (Human).